The following is a 1792-amino-acid chain: Eukaryotic translation initiation factor 4G (1792 aa).

Basic and acidic residues predominate over residues 1-12; sequence MSQRGDRGEGHA. 11 disordered regions span residues 1 to 285, 424 to 446, 491 to 590, 612 to 659, 678 to 761, 874 to 912, 960 to 993, 999 to 1018, 1275 to 1299, 1407 to 1503, and 1537 to 1600; these read MSQR…PRPP, DSSG…TYGS, SPSM…PTPV, NSVP…EDLK, GVNK…NESH, VASE…EITR, SSSI…LDDW, MSTP…EANG, GERE…EERE, WQQR…HRTT, and ELSS…KLYS. Positions 21–42 are enriched in gly residues; it reads FGGGHRGGGGVGGAGKGGGGSS. Residues 88–107 are compositionally biased toward pro residues; the sequence is PLRPPAPQNAPAHVPVPAPR. Polar residues-rich tracts occupy residues 147–156 and 179–191; these read RISSTSTSQG and STMQ…SSAP. 3 stretches are compositionally biased toward low complexity: residues 216–243, 263–278, and 432–442; these read PQAP…PLQQ, PSQV…SVPN, and PSVQQQSQPVS. Polar residues predominate over residues 491–517; that stretch reads SPSMNTGPGSNKDNLAGSTTSGHSQVT. Basic and acidic residues-rich tracts occupy residues 545–564, 571–587, and 633–643; these read DVNK…KDNE, KSGE…EKHP, and DSNKNATKDTR. Positions 644-654 are enriched in polar residues; it reads NLSQEPQSASS. Low complexity predominate over residues 699 to 718; the sequence is AADASSIDRSSARSTSESTE. A compositionally biased stretch (basic and acidic residues) spans 964-990; that stretch reads ADHELPDESSEKEVNMGEDEGKKKVEL. Residues 1018–1030 are EIF4E-binding; sequence GRKRYSRDFLLTL. An MIF4G domain is found at 1183-1406; sequence QRQLKAILNK…RDSIDLRKNK (224 aa). Residues 1278-1289 are compositionally biased toward acidic residues; the sequence is EEAEADKTEEEG. Composition is skewed to basic and acidic residues over residues 1290–1299 and 1411–1432; these read EIKQTKEERE and RKVE…ERHA. Low complexity-rich tracts occupy residues 1439–1450 and 1461–1470; these read RGSVVGSGPRRG and SAAALASPSS. Basic and acidic residues-rich tracts occupy residues 1490 to 1503 and 1559 to 1572; these read IRFE…HRTT and AREE…DRSG. Positions 1576 to 1593 are enriched in polar residues; it reads PNTQFAGPSNRPASQEGR. The MI domain maps to 1603–1727; it reads DLREKSISAI…SLQEVGTLIE (125 aa).

The protein belongs to the eukaryotic initiation factor 4G family. As to quaternary structure, EIF4F is a multi-subunit complex, the composition of which varies with external and internal environmental conditions. It is composed of at least EIF4A, EIF4E and EIF4G. In higher plants two isoforms of EIF4F have been identified, named isoform EIF4F and isoform EIF(iso)4F. Isoform EIF4F has subunits p220 and p26, whereas isoform EIF(iso)4F has subunits p82 and p28.

Component of the protein complex eIF4F, which is involved in the recognition of the mRNA cap, ATP-dependent unwinding of 5'-terminal secondary structure and recruitment of mRNA to the ribosome. In Oryza sativa subsp. japonica (Rice), this protein is Eukaryotic translation initiation factor 4G.